We begin with the raw amino-acid sequence, 810 residues long: Leucine--tRNA ligase (810 aa).

The 'HIGH' region signature appears at 43 to 53; the sequence is PYPSGTLHIGH. Residues 578 to 582 carry the 'KMSKS' region motif; the sequence is KMSKS. Position 581 (Lys581) interacts with ATP.

It belongs to the class-I aminoacyl-tRNA synthetase family.

Its subcellular location is the cytoplasm. The enzyme catalyses tRNA(Leu) + L-leucine + ATP = L-leucyl-tRNA(Leu) + AMP + diphosphate. In Solibacter usitatus (strain Ellin6076), this protein is Leucine--tRNA ligase.